Here is a 352-residue protein sequence, read N- to C-terminus: Ion-translocating oxidoreductase complex subunit D (352 aa).

4 helical membrane-spanning segments follow: residues 20-40 (IMLL…WFFG), 42-62 (GTLV…ALVL), 89-109 (IPPL…VIIA), and 123-143 (PAMI…TSWL). Thr187 is subject to FMN phosphoryl threonine. 5 helical membrane-spanning segments follow: residues 214–234 (ILAG…GLWL), 242–262 (WHIP…GWLF), 267–287 (LAAP…FFIL), 301–321 (LIFG…GGYP), and 322–342 (DGVA…DYYT).

It belongs to the NqrB/RnfD family. In terms of assembly, the complex is composed of six subunits: RsxA, RsxB, RsxC, RsxD, RsxE and RsxG. FMN serves as cofactor.

It localises to the cell inner membrane. Functionally, part of a membrane-bound complex that couples electron transfer with translocation of ions across the membrane. Required to maintain the reduced state of SoxR. The chain is Ion-translocating oxidoreductase complex subunit D from Shigella sonnei (strain Ss046).